Here is a 258-residue protein sequence, read N- to C-terminus: MSLKDSAKIALSLMDLTTLNDNDTDEKVITLCQQGKTEFGTPAAVCVYPRFVPIARKALKAQGTEQVKIATVTNFPHGNDDIDIAVAETKAAVAYGADEVDVVFPYKALMAGNEQIGFELVQQCKAVCQASNVLLKVIIETGELKTAELIRKASEISIKAGADFIKTSTGKVPVNATLESARIMLETIRDLNVADRVGFKAAGGVKTAEEAAQYLALAQEILGHDWVNSDHFRFGASSLLTNLLAALNGQANQKVSGY.

Asp101 serves as the catalytic Proton donor/acceptor. Lys166 serves as the catalytic Schiff-base intermediate with acetaldehyde. Lys200 functions as the Proton donor/acceptor in the catalytic mechanism.

This sequence belongs to the DeoC/FbaB aldolase family. DeoC type 2 subfamily.

The protein localises to the cytoplasm. It catalyses the reaction 2-deoxy-D-ribose 5-phosphate = D-glyceraldehyde 3-phosphate + acetaldehyde. It participates in carbohydrate degradation; 2-deoxy-D-ribose 1-phosphate degradation; D-glyceraldehyde 3-phosphate and acetaldehyde from 2-deoxy-alpha-D-ribose 1-phosphate: step 2/2. Its function is as follows. Catalyzes a reversible aldol reaction between acetaldehyde and D-glyceraldehyde 3-phosphate to generate 2-deoxy-D-ribose 5-phosphate. The chain is Deoxyribose-phosphate aldolase from Actinobacillus pleuropneumoniae serotype 7 (strain AP76).